A 245-amino-acid polypeptide reads, in one-letter code: Adenosylcobinamide-GDP ribazoletransferase (245 aa).

A run of 5 helical transmembrane segments spans residues 35–55 (WFPL…ALGL), 108–128 (IGAF…IGAH), 137–157 (GVLI…AALV), 176–196 (IAIG…TPAI), and 197–217 (TTVT…HLAR).

Belongs to the CobS family. The cofactor is Mg(2+).

Its subcellular location is the cell inner membrane. It catalyses the reaction alpha-ribazole + adenosylcob(III)inamide-GDP = adenosylcob(III)alamin + GMP + H(+). The enzyme catalyses alpha-ribazole 5'-phosphate + adenosylcob(III)inamide-GDP = adenosylcob(III)alamin 5'-phosphate + GMP + H(+). It participates in cofactor biosynthesis; adenosylcobalamin biosynthesis; adenosylcobalamin from cob(II)yrinate a,c-diamide: step 7/7. Functionally, joins adenosylcobinamide-GDP and alpha-ribazole to generate adenosylcobalamin (Ado-cobalamin). Also synthesizes adenosylcobalamin 5'-phosphate from adenosylcobinamide-GDP and alpha-ribazole 5'-phosphate. The chain is Adenosylcobinamide-GDP ribazoletransferase from Nitratidesulfovibrio vulgaris (strain ATCC 29579 / DSM 644 / CCUG 34227 / NCIMB 8303 / VKM B-1760 / Hildenborough) (Desulfovibrio vulgaris).